Here is a 438-residue protein sequence, read N- to C-terminus: ATP-dependent RNA helicase RhlB (438 aa).

The Q motif motif lies at 9–37; it reads QRFADLPLHPEVKQALAENGFEFCTPIQA. One can recognise a Helicase ATP-binding domain in the interval 40 to 219; sequence LPVLLQSKDI…YDHMNEPVKV (180 aa). 53–60 serves as a coordination point for ATP; that stretch reads AQTGTGKT. A DEAD box motif is present at residues 165–168; the sequence is DEAD. In terms of domain architecture, Helicase C-terminal spans 243-390; sequence KMRLLLTLIE…VSNYDSEALL (148 aa). The disordered stretch occupies residues 395–438; it reads TPAKIHRKHPSGTRNLRDRSGTSRPGAQRSGARPPRHDRTRRHS. The segment covering 428–438 has biased composition (basic residues); the sequence is PPRHDRTRRHS.

This sequence belongs to the DEAD box helicase family. RhlB subfamily. Component of the RNA degradosome, which is a multiprotein complex involved in RNA processing and mRNA degradation.

The protein resides in the cytoplasm. The enzyme catalyses ATP + H2O = ADP + phosphate + H(+). Functionally, DEAD-box RNA helicase involved in RNA degradation. Has RNA-dependent ATPase activity and unwinds double-stranded RNA. The polypeptide is ATP-dependent RNA helicase RhlB (Shewanella baltica (strain OS223)).